We begin with the raw amino-acid sequence, 337 residues long: Terpene cyclase (337 aa).

Residues 5–25 (ASVIFLSLSVLAAVGVWGPFV) traverse the membrane as a helical segment. N-linked (GlcNAc...) asparagine glycosylation occurs at Asn-65. 7 helical membrane-spanning segments follow: residues 72–92 (IAYC…VILC), 111–131 (GLLS…MSFI), 149–169 (ALIL…LNVL), 177–197 (IWGI…ARII), 222–242 (VAGG…LGIF), 267–287 (LQVD…HELI), and 298–318 (LGGL…AAAW).

The protein belongs to the membrane-bound ascI terpene cyclase family.

The protein localises to the membrane. It participates in antifungal biosynthesis. In terms of biological role, cyclase; part of the gene cluster that mediates the biosynthesis of the tetrahydropyranyl antifungal agent lanomycin that acts as an inhibitor of CYP51 and blocks the ergosterol biosynthesis. The biosynthesis probably begins with the formation of an hexaketide, followed by methionine mediated alkylation of C-2 and C-6, and methylation of the reduced C-3 oxygen, pyran forming reductive ring closure, oxygenation of C-4, beta-keto reduction, enoyl reduction and dehydration of the remaining oxygens, and finally, acylation with glycine to complete the biosynthesis. This Pyrenophora dematioidea (Helminthosporium dematioideum) protein is Terpene cyclase.